We begin with the raw amino-acid sequence, 302 residues long: Ribosomal protein L11 methyltransferase (302 aa).

Positions 155, 176, 198, and 239 each coordinate S-adenosyl-L-methionine.

Belongs to the methyltransferase superfamily. PrmA family.

The protein localises to the cytoplasm. It carries out the reaction L-lysyl-[protein] + 3 S-adenosyl-L-methionine = N(6),N(6),N(6)-trimethyl-L-lysyl-[protein] + 3 S-adenosyl-L-homocysteine + 3 H(+). Its function is as follows. Methylates ribosomal protein L11. The sequence is that of Ribosomal protein L11 methyltransferase from Caldicellulosiruptor saccharolyticus (strain ATCC 43494 / DSM 8903 / Tp8T 6331).